A 260-amino-acid polypeptide reads, in one-letter code: MVLIRVLANLLILQLSYAQMSSELVTGGDECNRNEHRFLVALYDPDRFLCGGTLLNEEWVLTAAHCDRRNMWIKLGMHSKTVPNEDEQRRVPKEKFFCLSTKNYTLWDKDIMLIRLDSPVSNSEHIAPLSLPSSPPSVGSVCRIMGWGTISSNKETYPNVPHCANINILDYEVCLAAYPEFVLPATSRTLCAGILEGGKDSCKGDSGGPLICNGQFQGILSWGNDVCGYILQPALYTRVFDHLDWIQRIIAGNTDATCPP.

An N-terminal signal peptide occupies residues 1–18 (MVLIRVLANLLILQLSYA). The propeptide occupies 19 to 24 (QMSSEL). A Peptidase S1 domain is found at 25 to 251 (VTGGDECNRN…HLDWIQRIIA (227 aa)). Disulfide bonds link cysteine 31/cysteine 163, cysteine 50/cysteine 66, cysteine 98/cysteine 258, cysteine 142/cysteine 212, cysteine 174/cysteine 191, and cysteine 202/cysteine 227. The active-site Charge relay system is the histidine 65. An N-linked (GlcNAc...) asparagine glycan is attached at asparagine 103. The Charge relay system role is filled by aspartate 110. Serine 206 serves as the catalytic Charge relay system.

It belongs to the peptidase S1 family. Snake venom subfamily. Monomer. Expressed by the venom gland.

It is found in the secreted. Its function is as follows. Snake venom serine protease that may act in the hemostasis system of the prey. This is Snake venom serine proteinase 4a from Crotalus adamanteus (Eastern diamondback rattlesnake).